The sequence spans 475 residues: Transmembrane protein 44 (475 aa).

Over M1–S29 the chain is Extracellular. Residues F30–L50 form a helical membrane-spanning segment. At R51–S61 the chain is on the cytoplasmic side. The helical transmembrane segment at A62 to A82 threads the bilayer. Topologically, residues R83–Q88 are extracellular. A helical membrane pass occupies residues V89–P109. The Cytoplasmic segment spans residues V110 to S135. Residues V136 to P156 form a helical membrane-spanning segment. The Extracellular segment spans residues K157–E179. The chain crosses the membrane as a helical span at residues I180–P200. At L201–S259 the chain is on the cytoplasmic side. Residues I260–V280 traverse the membrane as a helical segment. Topologically, residues A281–P294 are extracellular. The helical transmembrane segment at W295–V315 threads the bilayer. At M316–D475 the chain is on the cytoplasmic side. Residues S390–D475 are disordered. Residues S424–S436 are compositionally biased toward low complexity. Residues D464–D475 are compositionally biased toward basic and acidic residues. The residue at position 465 (S465) is a Phosphoserine.

It is found in the membrane. The polypeptide is Transmembrane protein 44 (TMEM44) (Homo sapiens (Human)).